Here is a 322-residue protein sequence, read N- to C-terminus: Sideroflexin-2 (322 aa).

Met1 is subject to N-acetylmethionine. Helical transmembrane passes span 100 to 122 (MIIT…WQWV), 142 to 164 (SVRQ…AVGM), 174 to 192 (LVGR…CVNI), 228 to 250 (VVIS…MERL), and 265 to 287 (PLQV…GLFP).

The protein belongs to the sideroflexin family. As to expression, widely expressed, highest levels in kidney, liver, and pancreas.

The protein resides in the mitochondrion inner membrane. Its subcellular location is the mitochondrion outer membrane. It carries out the reaction L-serine(in) = L-serine(out). In terms of biological role, mitochondrial amino-acid transporter that mediates transport of serine into mitochondria. Involved in mitochondrial iron homeostasis by regulating heme biosynthesis. This chain is Sideroflexin-2, found in Homo sapiens (Human).